The primary structure comprises 348 residues: Large ribosomal subunit protein uL3m (348 aa).

The transit peptide at 1-40 directs the protein to the mitochondrion; that stretch reads MPGWRLLTQVGAQVLGRLGDGLGAALGPGNRTHIWLFVRG.

This sequence belongs to the universal ribosomal protein uL3 family. In terms of assembly, component of the mitochondrial large ribosomal subunit (mt-LSU). Mature mammalian 55S mitochondrial ribosomes consist of a small (28S) and a large (39S) subunit. The 28S small subunit contains a 12S ribosomal RNA (12S mt-rRNA) and 30 different proteins. The 39S large subunit contains a 16S rRNA (16S mt-rRNA), a copy of mitochondrial valine transfer RNA (mt-tRNA(Val)), which plays an integral structural role, and 52 different proteins.

Its subcellular location is the mitochondrion. The chain is Large ribosomal subunit protein uL3m (MRPL3) from Homo sapiens (Human).